The following is a 359-amino-acid chain: 3-dehydroquinate synthase (359 aa).

NAD(+) is bound by residues 71–76 (DGEAYK), 105–109 (GVVGD), 129–130 (TT), Lys-142, and Lys-151. Zn(2+)-binding residues include Glu-184, His-247, and His-264.

This sequence belongs to the sugar phosphate cyclases superfamily. Dehydroquinate synthase family. It depends on Co(2+) as a cofactor. The cofactor is Zn(2+). NAD(+) serves as cofactor.

The protein localises to the cytoplasm. It carries out the reaction 7-phospho-2-dehydro-3-deoxy-D-arabino-heptonate = 3-dehydroquinate + phosphate. It functions in the pathway metabolic intermediate biosynthesis; chorismate biosynthesis; chorismate from D-erythrose 4-phosphate and phosphoenolpyruvate: step 2/7. In terms of biological role, catalyzes the conversion of 3-deoxy-D-arabino-heptulosonate 7-phosphate (DAHP) to dehydroquinate (DHQ). The polypeptide is 3-dehydroquinate synthase (Burkholderia cenocepacia (strain ATCC BAA-245 / DSM 16553 / LMG 16656 / NCTC 13227 / J2315 / CF5610) (Burkholderia cepacia (strain J2315))).